Here is a 223-residue protein sequence, read N- to C-terminus: MNESIFPHWNSDQAITFLKEWNFSLGVILLLITIILQFGYTSRSMFVYLIKMIILWLMWPLTIILTIFNCFYALNNVFLGLSILFTIISIVIWILYFVNSIRLFIRTGSWWSFNPETNNLMCIDMKGKMYVRPVIEDYHTLTATVIRGHLYIQGVKLGTGYTLADLPVYVTVAKVQVLCTYKRAFLDKLDVNSGFAVFVKSKVGNYRLPSSKSSGMDTALLRA.

The Virion surface portion of the chain corresponds to 1 to 20; the sequence is MNESIFPHWNSDQAITFLKE. A helical transmembrane segment spans residues 21 to 41; it reads WNFSLGVILLLITIILQFGYT. At 42-51 the chain is on the intravirion side; sequence SRSMFVYLIK. Residues 52–72 form a helical membrane-spanning segment; it reads MIILWLMWPLTIILTIFNCFY. Over 73-80 the chain is Virion surface; that stretch reads ALNNVFLG. A helical membrane pass occupies residues 81 to 101; that stretch reads LSILFTIISIVIWILYFVNSI. Topologically, residues 102-223 are intravirion; it reads RLFIRTGSWW…SGMDTALLRA (122 aa).

This sequence belongs to the betacoronaviruses M protein family. In terms of assembly, homomultimer. Interacts with envelope E protein in the budding compartment of the host cell, which is located between endoplasmic reticulum and the Golgi complex. Forms a complex with HE and S proteins. Interacts with nucleocapsid N protein. This interaction probably participates in RNA packaging into the virus.

The protein resides in the virion membrane. Its subcellular location is the host Golgi apparatus membrane. Its function is as follows. Component of the viral envelope that plays a central role in virus morphogenesis and assembly via its interactions with other viral proteins. This Human coronavirus HKU1 (isolate N5) (HCoV-HKU1) protein is Membrane protein.